A 230-amino-acid polypeptide reads, in one-letter code: Uracil-DNA glycosylase (230 aa).

D71 acts as the Proton acceptor in catalysis.

The protein belongs to the uracil-DNA glycosylase (UDG) superfamily. UNG family.

The protein localises to the cytoplasm. The catalysed reaction is Hydrolyzes single-stranded DNA or mismatched double-stranded DNA and polynucleotides, releasing free uracil.. In terms of biological role, excises uracil residues from the DNA which can arise as a result of misincorporation of dUMP residues by DNA polymerase or due to deamination of cytosine. The polypeptide is Uracil-DNA glycosylase (Nocardioides sp. (strain ATCC BAA-499 / JS614)).